Here is a 487-residue protein sequence, read N- to C-terminus: Protein nucleotidyltransferase YdiU (487 aa).

Residues Gly90, Gly92, Arg93, Lys113, Asp125, Gly126, Arg176, and Arg183 each contribute to the ATP site. Asp252 functions as the Proton acceptor in the catalytic mechanism. Mg(2+)-binding residues include Asn253 and Asp262. Asp262 contributes to the ATP binding site.

It belongs to the SELO family. The cofactor is Mg(2+). Mn(2+) serves as cofactor.

It carries out the reaction L-seryl-[protein] + ATP = 3-O-(5'-adenylyl)-L-seryl-[protein] + diphosphate. It catalyses the reaction L-threonyl-[protein] + ATP = 3-O-(5'-adenylyl)-L-threonyl-[protein] + diphosphate. The enzyme catalyses L-tyrosyl-[protein] + ATP = O-(5'-adenylyl)-L-tyrosyl-[protein] + diphosphate. The catalysed reaction is L-histidyl-[protein] + UTP = N(tele)-(5'-uridylyl)-L-histidyl-[protein] + diphosphate. It carries out the reaction L-seryl-[protein] + UTP = O-(5'-uridylyl)-L-seryl-[protein] + diphosphate. It catalyses the reaction L-tyrosyl-[protein] + UTP = O-(5'-uridylyl)-L-tyrosyl-[protein] + diphosphate. In terms of biological role, nucleotidyltransferase involved in the post-translational modification of proteins. It can catalyze the addition of adenosine monophosphate (AMP) or uridine monophosphate (UMP) to a protein, resulting in modifications known as AMPylation and UMPylation. This is Protein nucleotidyltransferase YdiU from Pseudomonas syringae pv. tomato (strain ATCC BAA-871 / DC3000).